The chain runs to 410 residues: Protein LTV1 homolog (410 aa).

2 disordered regions span residues 142–165 (VYRSTRRGEDSEEEEDDDEDDEMY) and 325–378 (EMDI…ARKL). Acidic residues-rich tracts occupy residues 151 to 165 (DSEEEEDDDEDDEMY) and 325 to 345 (EMDIAEEDEDDDEDMEDDDDK). The segment covering 357–366 (PKNETPEQRS) has biased composition (basic and acidic residues). A coiled-coil region spans residues 363 to 389 (EQRSLRKKAVKEARKLRRVEKKANKTM). Residues 367–378 (LRKKAVKEARKL) are compositionally biased toward basic residues.

Belongs to the LTV1 family.

The polypeptide is Protein LTV1 homolog (Caenorhabditis elegans).